A 121-amino-acid polypeptide reads, in one-letter code: Small ribosomal subunit protein uS13 (121 aa).

Residues arginine 92 to lysine 121 are disordered.

Belongs to the universal ribosomal protein uS13 family. As to quaternary structure, part of the 30S ribosomal subunit. Forms a loose heterodimer with protein S19. Forms two bridges to the 50S subunit in the 70S ribosome.

In terms of biological role, located at the top of the head of the 30S subunit, it contacts several helices of the 16S rRNA. In the 70S ribosome it contacts the 23S rRNA (bridge B1a) and protein L5 of the 50S subunit (bridge B1b), connecting the 2 subunits; these bridges are implicated in subunit movement. Contacts the tRNAs in the A and P-sites. This Oceanobacillus iheyensis (strain DSM 14371 / CIP 107618 / JCM 11309 / KCTC 3954 / HTE831) protein is Small ribosomal subunit protein uS13.